The following is a 1372-amino-acid chain: DNA-directed RNA polymerase subunit beta (1372 aa).

The protein belongs to the RNA polymerase beta chain family. In terms of assembly, the RNAP catalytic core consists of 2 alpha, 1 beta, 1 beta' and 1 omega subunit. When a sigma factor is associated with the core the holoenzyme is formed, which can initiate transcription.

It carries out the reaction RNA(n) + a ribonucleoside 5'-triphosphate = RNA(n+1) + diphosphate. In terms of biological role, DNA-dependent RNA polymerase catalyzes the transcription of DNA into RNA using the four ribonucleoside triphosphates as substrates. This chain is DNA-directed RNA polymerase subunit beta, found in Nitratidesulfovibrio vulgaris (strain ATCC 29579 / DSM 644 / CCUG 34227 / NCIMB 8303 / VKM B-1760 / Hildenborough) (Desulfovibrio vulgaris).